A 667-amino-acid chain; its full sequence is Gamma-tubulin complex component 4 (667 aa).

The tract at residues 424–446 is disordered; the sequence is DHKADATQPREVPSRETSPREAP.

Belongs to the TUBGCP family. In terms of assembly, component of the gamma-tubulin ring complex (gTuRC) consisting of TUBGCP2, TUBGCP3, TUBGCP4, TUBGCP5 and TUBGCP6 and gamma-tubulin TUBG1 or TUBG2. TUBGCP2, TUBGCP3, TUBGCP4, TUBGCP5 and TUBGCP6 assemble in a 5:5:2:1:1 stoichiometry; each is associated with a gamma-tubulin, thereby arranging 14 gamma-tubulins in a helical manner. Gamma-tubulin at the first position is blocked by TUBGCP3 at the last position, allowing 13 protafilaments to grow into a microtubule. The gTuRC (via TUBGCP3 and TUBGCP6) interacts with ACTB and MZT1; the interactions form a luminal bridge that stabilizes the initial structure during complex assembly. The gTuRC (via TUBGCP2) interacts with MZT2A/MZT2B and CDK5RAP2 (via CM1 motif); the interactions play a role in gTuRC activation. Interacts with NINL. Interacts with ATF5; the ATF5:PCNT:polyglutamylated tubulin (PGT) tripartite unites the mother centriole and the pericentriolar material (PCM) in the centrosome.

The protein localises to the cytoplasm. Its subcellular location is the cytoskeleton. It is found in the microtubule organizing center. The protein resides in the centrosome. Component of the gamma-tubulin ring complex (gTuRC) which mediates microtubule nucleation. The gTuRC regulates the minus-end nucleation of alpha-beta tubulin heterodimers that grow into microtubule protafilaments, a critical step in centrosome duplication and spindle formation. In Mus musculus (Mouse), this protein is Gamma-tubulin complex component 4 (Tubgcp4).